A 576-amino-acid chain; its full sequence is Non-neuronal cytoplasmic intermediate filament protein (576 aa).

The interval 1-51 (MTSKISTTYEEEGRQSKIQPRAFVITRSGPSSKSSSFSARQSYASSRQSIT) is disordered. Positions 2–75 (TSKISTTYEE…FRGTREKEKR (74 aa)) are head. The span at 28-49 (SGPSSKSSSFSARQSYASSRQS) shows a compositional bias: low complexity. The region spanning 73-425 (EKREMQNLNE…KLLEGEESRV (353 aa)) is the IF rod domain. The segment at 76–108 (EMQNLNERLASYIEKVHFLDAQVKKLEAENEAL) is coil 1A. Residues 109-122 (RNRKSESLQPIRDA) form a linker 1 region. The coil 1B stretch occupies residues 123–260 (YENELAQARK…DLLDQLELLK (138 aa)). The linker 2 stretch occupies residues 261-278 (PEPIQIKGMDYAEFWKSE). Residues 279-425 (LSKCVREIQS…KLLEGEESRV (147 aa)) are coil 2. The segment at 426–576 (GLRSLVEQAI…KATLIAKFSG (151 aa)) is tail. An LTD domain is found at 456–574 (GSMTIQRSSK…NEKATLIAKF (119 aa)).

The protein belongs to the intermediate filament family. Can form homopolymers.

It is found in the cytoplasm. This is Non-neuronal cytoplasmic intermediate filament protein from Cornu aspersum (Brown garden snail).